The sequence spans 153 residues: MADWFHSALKTCTHVCDFSDIKASSQQDFFCCDSMRGKLSEPRKVLLVSCFVSFTGSFYGSNRNVRGQVQLGMQQDDGVVRPIGYIPIGGYLYHDDYGYYQGEKTFNLDIESDYLKPDEDFWKRFTINIVNDKGLDDRCDVKCYVVHTMRIKV.

The protein belongs to the nanoviridae nuclear shuttle protein family.

The protein localises to the host nucleus. The protein resides in the host cytoplasm. Putative nuclear shuttle protein. In Trifolium subterraneum (Subterranean clover), this protein is Putative nuclear shuttle protein (DNA-N).